The primary structure comprises 149 residues: Calmodulin (149 aa).

A2 is modified (N-acetylalanine). 4 EF-hand domains span residues 8-43 (EQIA…LGQN), 44-79 (PTEA…KMKD), 81-116 (DSEE…LGEK), and 117-149 (LTDE…MMSK). Ca(2+) contacts are provided by D21, D23, D25, T27, E32, D57, D59, N61, T63, E68, D94, D96, N98, and E105. Position 116 is an N6,N6,N6-trimethyllysine (K116). Residues D130, D132, D134, Q136, and E141 each coordinate Ca(2+).

The protein belongs to the calmodulin family.

Calmodulin mediates the control of a large number of enzymes, ion channels and other proteins by Ca(2+). Among the enzymes to be stimulated by the calmodulin-Ca(2+) complex are a number of protein kinases and phosphatases. This Lumbricus rubellus (Humus earthworm) protein is Calmodulin.